The chain runs to 229 residues: Flagellar L-ring protein (229 aa).

Positions 1-23 are cleaved as a signal peptide; the sequence is MSPLTRIALALAASAALVLALTA. Cys-24 carries the N-palmitoyl cysteine lipid modification. A lipid anchor (S-diacylglycerol cysteine) is attached at Cys-24.

It belongs to the FlgH family. In terms of assembly, the basal body constitutes a major portion of the flagellar organelle and consists of four rings (L,P,S, and M) mounted on a central rod.

It localises to the cell outer membrane. Its subcellular location is the bacterial flagellum basal body. In terms of biological role, assembles around the rod to form the L-ring and probably protects the motor/basal body from shearing forces during rotation. This is Flagellar L-ring protein from Anaeromyxobacter dehalogenans (strain 2CP-C).